A 276-amino-acid chain; its full sequence is uncharacterized protein (276 aa).

The tract at residues Met-1–Asn-70 is disordered. A compositionally biased stretch (basic and acidic residues) spans Val-21–His-35. The 79-residue stretch at Gly-105 to Glu-183 folds into the RRM domain. The tract at residues Val-249–Lys-276 is disordered. Low complexity predominate over residues Pro-252–Lys-261. Basic residues predominate over residues Lys-262–Lys-276.

It localises to the nucleus. The protein resides in the nucleolus. This is an uncharacterized protein from Schizosaccharomyces pombe (strain 972 / ATCC 24843) (Fission yeast).